The chain runs to 496 residues: UDP-glycosyltransferase 73C3 (496 aa).

UDP-alpha-D-glucose is bound by residues serine 297, alanine 357–glutamine 359, histidine 374–glutamate 382, and phenylalanine 396–glutamine 399.

The protein belongs to the UDP-glycosyltransferase family.

This chain is UDP-glycosyltransferase 73C3 (UGT73C3), found in Arabidopsis thaliana (Mouse-ear cress).